A 108-amino-acid polypeptide reads, in one-letter code: Putative double-stranded DNA mimic protein PBPRA1522 (108 aa).

This sequence belongs to the putative dsDNA mimic protein family.

Its function is as follows. May act as a double-stranded DNA (dsDNA) mimic. Probably regulates the activity of a dsDNA-binding protein. The polypeptide is Putative double-stranded DNA mimic protein PBPRA1522 (Photobacterium profundum (strain SS9)).